The primary structure comprises 214 residues: Anti-sigma-F factor NrsF (214 aa).

The Cytoplasmic segment spans residues 1–25 (MRTDDLIDALAADAGRGTEPAPPRR). Residues 26–46 (LALVAGLGGVAALLLVLGWLQ) traverse the membrane as a helical segment. The Periplasmic portion of the chain corresponds to 47–53 (ARPDLGQ). A helical transmembrane segment spans residues 54–74 (AILGPMFWVKAIYTGLLGLAG). Residues 75-90 (YLAVERLSRPGGSGRR) lie on the Cytoplasmic side of the membrane. The helical transmembrane segment at 91-111 (GWIIGAVVFGACAVAGIYQAI) threads the bilayer. Topologically, residues 112–134 (TSPDVQAALKLLHGYSWRSCSPR) are periplasmic. The helical transmembrane segment at 135-155 (ILVLGLPMLALGLWALRGMAP) threads the bilayer. The Cytoplasmic segment spans residues 156–158 (TRP). The helical transmembrane segment at 159–179 (GLAGFAMGLFSGGVVATLYGL) threads the bilayer. Residues 180-185 (HCPEHT) lie on the Periplasmic side of the membrane. A helical membrane pass occupies residues 186-206 (FTFLALWYSLGVLALGLIGGW). Topologically, residues 207–214 (AGRWLLRW) are cytoplasmic.

Belongs to the NrsF anti-sigma-F factor family.

The protein localises to the cell inner membrane. Its function is as follows. An anti-sigma factor for extracytoplasmic function (ECF) sigma factor sigma-F (SigF), which responds to chromate and cadmium. Overexpression leads to loss of response to dichromate. ECF sigma factors are held in an inactive form by a cognate anti-sigma factor. This Caulobacter vibrioides (strain NA1000 / CB15N) (Caulobacter crescentus) protein is Anti-sigma-F factor NrsF.